The primary structure comprises 219 residues: MTSSVIPPSPSAADYAAEGDRPLVPETDNPIGLFQDWMAQARASEPNDSNAMSLATVDADGRPDVRIVLLKGVDSEGFTFFTNLESVKGVQLAANPVAALCFHWKSQRRQVRVRGGVAPVSAAEADAYFASRAAQSRISAIASDQSRPLADRAIFEQRVAEISSVYGDDNDIPRPPHWGGFRLVPTEIEFWQDQAFRMHDRLRFYRKADGGWATVRLYP.

The disordered stretch occupies residues 1–23 (MTSSVIPPSPSAADYAAEGDRPL). Residues 66–71 (RIVLLK), 81–82 (FT), lysine 88, and glutamine 110 each bind FMN. Lysine 71 is a substrate binding site. Substrate is bound by residues tyrosine 128, arginine 132, and serine 136. FMN contacts are provided by residues 145 to 146 (QS) and tryptophan 191. Substrate is bound at residue 197–199 (RMH). Arginine 201 serves as a coordination point for FMN.

The protein belongs to the pyridoxamine 5'-phosphate oxidase family. In terms of assembly, homodimer. Requires FMN as cofactor.

It catalyses the reaction pyridoxamine 5'-phosphate + O2 + H2O = pyridoxal 5'-phosphate + H2O2 + NH4(+). The catalysed reaction is pyridoxine 5'-phosphate + O2 = pyridoxal 5'-phosphate + H2O2. The protein operates within cofactor metabolism; pyridoxal 5'-phosphate salvage; pyridoxal 5'-phosphate from pyridoxamine 5'-phosphate: step 1/1. It functions in the pathway cofactor metabolism; pyridoxal 5'-phosphate salvage; pyridoxal 5'-phosphate from pyridoxine 5'-phosphate: step 1/1. Catalyzes the oxidation of either pyridoxine 5'-phosphate (PNP) or pyridoxamine 5'-phosphate (PMP) into pyridoxal 5'-phosphate (PLP). The polypeptide is Pyridoxine/pyridoxamine 5'-phosphate oxidase (Hyphomonas neptunium (strain ATCC 15444)).